The chain runs to 205 residues: UPF0688 protein C1orf174 homolog (205 aa).

Residues 1–18 (MRKRKLSDRVRCSARLKN) are compositionally biased toward basic residues. Disordered stretches follow at residues 1–128 (MRKR…PSKV) and 184–205 (AKEEEEDDDDDYADGLVNEGNI). The segment covering 46–63 (NTDKKSPKKLENDEKGLM) has biased composition (basic and acidic residues). Over residues 71 to 108 (INKTDNTASNESNAGNVNTCPSASPFSDLNEVSRNGLT) the composition is skewed to polar residues. The segment covering 187 to 196 (EEEDDDDDYA) has biased composition (acidic residues).

It belongs to the UPF0688 family.

Its subcellular location is the nucleus. This chain is UPF0688 protein C1orf174 homolog, found in Xenopus laevis (African clawed frog).